A 387-amino-acid chain; its full sequence is Alpha-sarcoglycan (387 aa).

The first 23 residues, 1-23 (MAAAVTWIPLLAGLLAGLRDTKA), serve as a signal peptide directing secretion. Topologically, residues 24–293 (QQTTLHLLVG…RDFLTDALVT (270 aa)) are extracellular. N-linked (GlcNAc...) asparagine glycans are attached at residues asparagine 174 and asparagine 246. The chain crosses the membrane as a helical span at residues 294–314 (LLVPLLVALLLTLLLAYIMCF). The Cytoplasmic segment spans residues 315-387 (RREGRLKRDM…AQMPLILDQH (73 aa)). A Phosphoserine modification is found at serine 377.

It belongs to the sarcoglycan alpha/epsilon family. Cross-link to form 2 major subcomplexes: one consisting of SGCB, SGCD and SGCG and the other consisting of SGCB and SGCD. The association between SGCB and SGCG is particularly strong while SGCA is loosely associated with the other sarcoglycans. Interacts with the syntrophin SNTA1. As to expression, striated muscle, both skeletal and cardiac.

It is found in the cell membrane. The protein resides in the sarcolemma. The protein localises to the cytoplasm. Its subcellular location is the cytoskeleton. Component of the sarcoglycan complex, a subcomplex of the dystrophin-glycoprotein complex which forms a link between the F-actin cytoskeleton and the extracellular matrix. This Mus musculus (Mouse) protein is Alpha-sarcoglycan (Sgca).